Reading from the N-terminus, the 155-residue chain is Leader peptidase HopD (155 aa).

This sequence belongs to the peptidase A24 family.

This chain is Leader peptidase HopD (hopD), found in Escherichia coli.